The sequence spans 159 residues: 2-C-methyl-D-erythritol 2,4-cyclodiphosphate synthase (159 aa).

Positions 8 and 10 each coordinate a divalent metal cation. 4-CDP-2-C-methyl-D-erythritol 2-phosphate is bound by residues 8–10 (DVH) and 34–35 (HS). His42 is a binding site for a divalent metal cation. 4-CDP-2-C-methyl-D-erythritol 2-phosphate is bound by residues 56-58 (DIG), 61-65 (FPDTD), 100-106 (AQAPKML), 132-135 (TTTE), Phe139, and Arg142.

It belongs to the IspF family. As to quaternary structure, homotrimer. Requires a divalent metal cation as cofactor.

The catalysed reaction is 4-CDP-2-C-methyl-D-erythritol 2-phosphate = 2-C-methyl-D-erythritol 2,4-cyclic diphosphate + CMP. It participates in isoprenoid biosynthesis; isopentenyl diphosphate biosynthesis via DXP pathway; isopentenyl diphosphate from 1-deoxy-D-xylulose 5-phosphate: step 4/6. Its function is as follows. Involved in the biosynthesis of isopentenyl diphosphate (IPP) and dimethylallyl diphosphate (DMAPP), two major building blocks of isoprenoid compounds. Catalyzes the conversion of 4-diphosphocytidyl-2-C-methyl-D-erythritol 2-phosphate (CDP-ME2P) to 2-C-methyl-D-erythritol 2,4-cyclodiphosphate (ME-CPP) with a corresponding release of cytidine 5-monophosphate (CMP). The chain is 2-C-methyl-D-erythritol 2,4-cyclodiphosphate synthase from Escherichia coli O139:H28 (strain E24377A / ETEC).